The following is a 279-amino-acid chain: Tryptophan synthase alpha chain (279 aa).

Catalysis depends on proton acceptor residues E50 and D61.

The protein belongs to the TrpA family. As to quaternary structure, tetramer of two alpha and two beta chains.

It carries out the reaction (1S,2R)-1-C-(indol-3-yl)glycerol 3-phosphate + L-serine = D-glyceraldehyde 3-phosphate + L-tryptophan + H2O. Its pathway is amino-acid biosynthesis; L-tryptophan biosynthesis; L-tryptophan from chorismate: step 5/5. Functionally, the alpha subunit is responsible for the aldol cleavage of indoleglycerol phosphate to indole and glyceraldehyde 3-phosphate. In Methylobacterium radiotolerans (strain ATCC 27329 / DSM 1819 / JCM 2831 / NBRC 15690 / NCIMB 10815 / 0-1), this protein is Tryptophan synthase alpha chain.